Reading from the N-terminus, the 266-residue chain is Type 1 encapsulin shell protein (266 aa).

Belongs to the encapsulin family. Family 1 subfamily. Homomultimeric. This encapsulin nanocompartment is formed by 60 subunits, and encloses one Dyp homohexamer; partially assembled 58-subunit compartments with and without cargo are also purified. May assemble the shell from dimers. Monomers form pentamers, which assemble to form hollow shells with pores 5-8 Angstroms in diameter where 3 pentamers meet.

It is found in the encapsulin nanocompartment. Its function is as follows. Shell component of a type 1 encapsulin nanocompartment. Assembles into proteinaceous shells 23-24 nm in diameter with 2-2.5 nm thick walls. Endogenous cargo protein DyP (dye-decolorizing peroxidase) is targeted to the interior via its C-terminal extension; only 1 DyP hexamer is incorporated into each shell. Empty shells can be isolated in the absence of cargo. Cargo encapsulation probably precedes assembly of the nanocompartment; may assemble or disassemble via dimers, subcomplexes with a distinct preference for even numbers of subunits are detected. Nanocompartments are stable against mechanical forces; loaded nanocompartments are less stable than empty ones. Nanocompartments are stable between pH 5-10; they aggregate at pH 9-10 and start to disassemble at pH 11. They are stable in 1M NaCl, 1 M MgCl(2) and 1M CaCl(2), unstable in 20% DMSO (dimethylsulfoxide) and are stable in 20% but not 40% ethanol. This Brevibacterium linens protein is Type 1 encapsulin shell protein.